Consider the following 332-residue polypeptide: Glycerol-3-phosphate dehydrogenase [NAD(P)+] (332 aa).

NADPH contacts are provided by W11, R30, and K108. Residues K108, G137, and S139 each coordinate sn-glycerol 3-phosphate. NADPH is bound at residue A141. K192, D245, S255, R256, and N257 together coordinate sn-glycerol 3-phosphate. K192 functions as the Proton acceptor in the catalytic mechanism. NADPH is bound at residue R256. NADPH is bound by residues V280 and E282.

Belongs to the NAD-dependent glycerol-3-phosphate dehydrogenase family.

Its subcellular location is the cytoplasm. It catalyses the reaction sn-glycerol 3-phosphate + NAD(+) = dihydroxyacetone phosphate + NADH + H(+). The catalysed reaction is sn-glycerol 3-phosphate + NADP(+) = dihydroxyacetone phosphate + NADPH + H(+). It functions in the pathway membrane lipid metabolism; glycerophospholipid metabolism. Its function is as follows. Catalyzes the reduction of the glycolytic intermediate dihydroxyacetone phosphate (DHAP) to sn-glycerol 3-phosphate (G3P), the key precursor for phospholipid synthesis. In Burkholderia multivorans (strain ATCC 17616 / 249), this protein is Glycerol-3-phosphate dehydrogenase [NAD(P)+].